A 285-amino-acid chain; its full sequence is 4-diphosphocytidyl-2-C-methyl-D-erythritol kinase (285 aa).

Residue Lys-10 is part of the active site. ATP is bound at residue 92-102 (PFGAGLGGGSS). Asp-134 is a catalytic residue.

It belongs to the GHMP kinase family. IspE subfamily.

The catalysed reaction is 4-CDP-2-C-methyl-D-erythritol + ATP = 4-CDP-2-C-methyl-D-erythritol 2-phosphate + ADP + H(+). Its pathway is isoprenoid biosynthesis; isopentenyl diphosphate biosynthesis via DXP pathway; isopentenyl diphosphate from 1-deoxy-D-xylulose 5-phosphate: step 3/6. Catalyzes the phosphorylation of the position 2 hydroxy group of 4-diphosphocytidyl-2C-methyl-D-erythritol. The chain is 4-diphosphocytidyl-2-C-methyl-D-erythritol kinase from Chloroherpeton thalassium (strain ATCC 35110 / GB-78).